The primary structure comprises 1100 residues: Lysylphosphatidylglycerol biosynthesis bifunctional protein LysX (1100 aa).

The tract at residues 1 to 601 (MTPTSLARAR…LLHSDGTAPD (601 aa)) is phosphatidylglycerol lysyltransferase. The next 7 membrane-spanning stretches (helical) occupy residues 18-38 (VPAA…LASV), 60-80 (FPDT…ALAA), 84-104 (IAWW…IAGL), 112-132 (FAEV…AFLL), 154-174 (LVAS…LFPG), 206-226 (VFVN…TAIV), and 314-332 (AYGW…AQAF). Positions 602–1100 (GMGLQADLAD…TLPFPLAKPR (499 aa)) are lysine--tRNA ligase. The segment at residues 661-739 (VAVAGRVLRS…SLLVSGWRLI (79 aa)) is a DNA-binding region (OB). Residues D1012 and E1019 each coordinate Mg(2+).

The protein in the N-terminal section; belongs to the LPG synthetase family. In the C-terminal section; belongs to the class-II aminoacyl-tRNA synthetase family. Requires Mg(2+) as cofactor.

It localises to the cell membrane. The catalysed reaction is tRNA(Lys) + L-lysine + ATP = L-lysyl-tRNA(Lys) + AMP + diphosphate. It catalyses the reaction L-lysyl-tRNA(Lys) + a 1,2-diacyl-sn-glycero-3-phospho-(1'-sn-glycerol) = a 1,2-diacyl-sn-glycero-3-phospho-1'-(3'-O-L-lysyl)-sn-glycerol + tRNA(Lys). In terms of biological role, catalyzes the production of L-lysyl-tRNA(Lys)transfer and the transfer of a lysyl group from L-lysyl-tRNA(Lys) to membrane-bound phosphatidylglycerol (PG), which produces lysylphosphatidylglycerol (LPG), one of the components of the bacterial membrane with a positive net charge. LPG synthesis contributes to the resistance to cationic antimicrobial peptides (CAMPs) and likely protects M.tuberculosis against the CAMPs produced by competiting microorganisms (bacteriocins). In fact, the modification of anionic phosphatidylglycerol with positively charged L-lysine results in repulsion of the peptides. In Mycolicibacterium vanbaalenii (strain DSM 7251 / JCM 13017 / BCRC 16820 / KCTC 9966 / NRRL B-24157 / PYR-1) (Mycobacterium vanbaalenii), this protein is Lysylphosphatidylglycerol biosynthesis bifunctional protein LysX (lysX).